The following is a 503-amino-acid chain: Glycerol kinase (503 aa).

Thr-17 is a binding site for ADP. Residues Thr-17, Thr-18, and Ser-19 each coordinate ATP. Residue Thr-17 participates in sn-glycerol 3-phosphate binding. ADP is bound at residue Arg-21. Arg-87, Glu-88, Tyr-141, and Asp-245 together coordinate sn-glycerol 3-phosphate. The glycerol site is built by Arg-87, Glu-88, Tyr-141, Asp-245, and Gln-246. Positions 267 and 310 each coordinate ADP. ATP-binding residues include Thr-267, Gly-310, Gln-314, and Gly-411. Residues Gly-411 and Asn-415 each contribute to the ADP site.

It belongs to the FGGY kinase family.

It catalyses the reaction glycerol + ATP = sn-glycerol 3-phosphate + ADP + H(+). Its pathway is polyol metabolism; glycerol degradation via glycerol kinase pathway; sn-glycerol 3-phosphate from glycerol: step 1/1. Its activity is regulated as follows. Inhibited by fructose 1,6-bisphosphate (FBP). Functionally, key enzyme in the regulation of glycerol uptake and metabolism. Catalyzes the phosphorylation of glycerol to yield sn-glycerol 3-phosphate. The chain is Glycerol kinase from Pseudomonas tolaasii.